A 616-amino-acid polypeptide reads, in one-letter code: Cytochrome c oxidase subunit 1 (616 aa).

Residues 28–48 form a helical membrane-spanning segment; it reads HLYLISGGFFFLLGGLEALFI. Histidine 72 provides a ligand contact to Fe(II)-heme a. The next 6 helical transmembrane spans lie at 75–95, 102–122, 158–178, 198–218, 243–263, and 275–295; these read TMIFLAAMPLVFAFMNAVVPL, VAFPFLNALGFWMFFFGGLFL, GLQISGFGTIMGAINFLVTII, FVTSALILFAFPPLTVGLIFM, LFWVFGHPEVYILVLPAFGIF, and LFGYSSMVFATVLIAFLGFMV. Histidine 249 and tyrosine 253 together coordinate Cu cation. Residues 249–253 constitute a cross-link (1'-histidyl-3'-tyrosine (His-Tyr)); the sequence is HPEVY. Cu cation-binding residues include histidine 298 and histidine 299. 7 helical membrane passes run 303-323, 349-369, 380-400, 420-440, 463-483, 553-573, and 577-597; these read VGMGPIANAIFAVATMTIAVP, AVAFIPSFVMGGVTGVMLASA, FVVAHFHYVIVGGVVFALLAG, ITFWLFFIGFHLTFFIQHFLG, ISTIGAFFIAAATVILLINIV, SSFLPFVIAFGLFVAAFGFTY, and AGWGLPVAILGLLITLGSMFL. Histidine 384 is a Fe(II)-heme o binding site. Histidine 384 lines the heme a3 pocket. Histidine 386 is a binding site for Fe(II)-heme a.

Belongs to the heme-copper respiratory oxidase family. The cofactor is Cu(2+). Heme is required as a cofactor.

The protein localises to the cell membrane. It catalyses the reaction 4 Fe(II)-[cytochrome c] + O2 + 8 H(+)(in) = 4 Fe(III)-[cytochrome c] + 2 H2O + 4 H(+)(out). It functions in the pathway energy metabolism; oxidative phosphorylation. In terms of biological role, cytochrome c oxidase is the component of the respiratory chain that catalyzes the reduction of oxygen to water. Subunits 1-3 form the functional core of the enzyme complex. Co I is the catalytic subunit of the enzyme. Electrons originating in cytochrome c are transferred via the copper A center of subunit 2 and heme a of subunit 1 to the bimetallic center formed by heme a3 and copper B. This cytochrome c oxidase shows proton pump activity across the membrane in addition to the electron transfer. The protein is Cytochrome c oxidase subunit 1 (ctaD) of Bacillus sp. (strain PS3).